Reading from the N-terminus, the 589-residue chain is Phenylalanine--tRNA ligase beta subunit (589 aa).

One can recognise a B5 domain in the interval 302 to 379 (LAYRKEMVRA…IAYGYSNIQM (78 aa)). Mg(2+) contacts are provided by Asp-357, Asp-363, Glu-366, and Asp-367.

The protein belongs to the phenylalanyl-tRNA synthetase beta subunit family. Type 2 subfamily. As to quaternary structure, heterotetramer; dimer of two heterodimers formed by FARSA and FARSB. Mg(2+) serves as cofactor.

The protein localises to the cytoplasm. The catalysed reaction is tRNA(Phe) + L-phenylalanine + ATP = L-phenylalanyl-tRNA(Phe) + AMP + diphosphate + H(+). The protein is Phenylalanine--tRNA ligase beta subunit (FARSB) of Pongo abelii (Sumatran orangutan).